A 21-amino-acid chain; its full sequence is Dart gland peptide (21 aa).

Residues 1 to 21 form a disordered region; it reads SINNTGGSGNRRLDKNGFAGQ. N-linked (GlcNAc...) asparagine glycosylation occurs at N3.

It is found in the secreted. This Cornu aspersum (Brown garden snail) protein is Dart gland peptide.